Consider the following 489-residue polypeptide: Beta-galactosidase (489 aa).

At K116 the chain carries N6-methyllysine; partial. K135 is subject to N6-methyllysine. E206 functions as the Proton donor in the catalytic mechanism. Residues K273 and K311 each carry the N6-methyllysine; partial modification. Residue K332 is modified to N6-methyllysine. E387 functions as the Nucleophile in the catalytic mechanism.

As to quaternary structure, homotetramer.

The catalysed reaction is Hydrolysis of terminal non-reducing beta-D-galactose residues in beta-D-galactosides.. The polypeptide is Beta-galactosidase (lacS) (Saccharolobus solfataricus (strain ATCC 35092 / DSM 1617 / JCM 11322 / P2) (Sulfolobus solfataricus)).